The chain runs to 502 residues: ATP synthase subunit alpha (502 aa).

169–176 (GDRQTGKT) is an ATP binding site.

It belongs to the ATPase alpha/beta chains family. In terms of assembly, F-type ATPases have 2 components, CF(1) - the catalytic core - and CF(0) - the membrane proton channel. CF(1) has five subunits: alpha(3), beta(3), gamma(1), delta(1), epsilon(1). CF(0) has three main subunits: a(1), b(2) and c(9-12). The alpha and beta chains form an alternating ring which encloses part of the gamma chain. CF(1) is attached to CF(0) by a central stalk formed by the gamma and epsilon chains, while a peripheral stalk is formed by the delta and b chains.

The protein localises to the cell inner membrane. It carries out the reaction ATP + H2O + 4 H(+)(in) = ADP + phosphate + 5 H(+)(out). Functionally, produces ATP from ADP in the presence of a proton gradient across the membrane. The alpha chain is a regulatory subunit. The sequence is that of ATP synthase subunit alpha from Pelobacter propionicus (strain DSM 2379 / NBRC 103807 / OttBd1).